Here is a 459-residue protein sequence, read N- to C-terminus: Cysteine--tRNA ligase (459 aa).

Cys-31 is a binding site for Zn(2+). The 'HIGH' region signature appears at 33 to 43; the sequence is PTVYDNPHIGN. Positions 216, 241, and 245 each coordinate Zn(2+). The short motif at 274–278 is the 'KMSKS' region element; that stretch reads KMSKS. An ATP-binding site is contributed by Lys-277.

This sequence belongs to the class-I aminoacyl-tRNA synthetase family. As to quaternary structure, monomer. Zn(2+) serves as cofactor.

It localises to the cytoplasm. It catalyses the reaction tRNA(Cys) + L-cysteine + ATP = L-cysteinyl-tRNA(Cys) + AMP + diphosphate. The protein is Cysteine--tRNA ligase of Rickettsia canadensis (strain McKiel).